The primary structure comprises 36 residues: Photosystem I reaction center subunit VIII (36 aa).

A helical membrane pass occupies residues 9–29 (ILVPLVGLVFPAVTMASLFLY).

It belongs to the PsaI family.

It localises to the plastid. The protein resides in the chloroplast thylakoid membrane. May help in the organization of the PsaL subunit. The chain is Photosystem I reaction center subunit VIII from Staurastrum punctulatum (Green alga).